Consider the following 2752-residue polypeptide: Piezo-type mechanosensitive ion channel component 2 (2752 aa).

The Cytoplasmic portion of the chain corresponds to 1–12; that stretch reads MASEVVCGLIFR. Residues 13–24 traverse the membrane as a helical segment; sequence LLLPICLAVACA. Over 25-30 the chain is Extracellular; that stretch reads FRYNGL. A helical transmembrane segment spans residues 31–43; the sequence is SFVYLIYLLLIPL. Topologically, residues 44 to 50 are cytoplasmic; that stretch reads FSEPTKT. A helical transmembrane segment spans residues 51 to 76; that stretch reads TMQGHTGRLLKSLCFISLSFLLLHII. At 77–122 the chain is on the extracellular side; it reads FHITLVSLEAQHRIAPGYNCSTWEKTFRQIGFESLKGADAGNGIRV. A glycan (N-linked (GlcNAc...) asparagine) is linked at asparagine 95. A helical transmembrane segment spans residues 123–141; the sequence is FVPDIGMFIASLTIWLLCR. Topologically, residues 142–221 are cytoplasmic; that stretch reads NIVQKPVTDE…KEFIGNMITT (80 aa). A helical membrane pass occupies residues 222-237; sequence AGKVVVTILLGSSGMM. Residues 238–240 are Extracellular-facing; it reads LPS. A helical transmembrane segment spans residues 241–258; that stretch reads LTSSVYFFVFLGLCTWWS. The Cytoplasmic portion of the chain corresponds to 259–264; it reads WCRTFD. A helical transmembrane segment spans residues 265–287; the sequence is PLLFSCLCVLLAIFTAGHLIGLY. At 288–335 the chain is on the extracellular side; sequence LYQFQFFQEAVPPNDYYARLFGIKSVIQTDCSSTWKIIVNPDLSWYHH. Residues 336-355 form a helical membrane-spanning segment; sequence ANPILLLVMYYTLATLIRIW. Residues 356-492 lie on the Cytoplasmic side of the membrane; the sequence is LQEPLVQDEG…SIKVHAMVSV (137 aa). Positions 446-478 are disordered; sequence STPQYRWEPSDESSEKREEEEEEKEEFEEERSR. A compositionally biased stretch (acidic residues) spans 463-474; the sequence is EEEEEEKEEFEE. The chain crosses the membrane as a helical span at residues 493–514; the sequence is FQFIMKQSYICALIAMMAWSIT. Topologically, residues 515–519 are extracellular; sequence YHSWL. The chain crosses the membrane as a helical span at residues 520-531; sequence TFVLLIWSCTLW. Topologically, residues 532–535 are cytoplasmic; sequence MIRN. Residues 536–562 traverse the membrane as a helical segment; that stretch reads RRKYAMISSPFMVVYGNLLLILQYIWS. Topologically, residues 563–583 are extracellular; the sequence is FELPEIKKVPGFLEKKEPGEL. The chain crosses the membrane as a helical span at residues 584–614; that stretch reads ASKILFTITFWLLLRQHLTEQKALQEKEALL. Topologically, residues 615–685 are cytoplasmic; that stretch reads SEVKIGSQEN…GNLVVAMFIK (71 aa). Residues 623–632 show a composition bias toward acidic residues; sequence ENEEKDEELQ. The segment at 623–664 is disordered; it reads ENEEKDEELQDIQVEGEPKEEEEEEAKEEKQERKKVEQEEAE. Residues 649–660 show a composition bias toward basic and acidic residues; that stretch reads KEEKQERKKVEQ. Residues 686–699 traverse the membrane as a helical segment; it reads YWIYVCGGMFFFVS. Topologically, residues 700-705 are extracellular; the sequence is FEGKIV. The chain crosses the membrane as a helical span at residues 706–724; it reads MYKIIYMVLFLFCVALYQV. At 725–733 the chain is on the cytoplasmic side; the sequence is HYEWWRKIL. The helical transmembrane segment at 734-753 threads the bilayer; the sequence is KYFWMSVVIYTMLVLIFIYT. At 754–785 the chain is on the extracellular side; the sequence is YQFENFPGLWQNMTGLKKEKLEDLGLKQFTVA. The chain crosses the membrane as a helical span at residues 786-807; sequence ELFTRIFIPTSFLLVCILHLHY. Residues 808 to 940 are Cytoplasmic-facing; sequence FHDRFLELTD…QVFMWWILEL (133 aa). Serine 838 carries the post-translational modification Phosphoserine. Residues 862–883 are compositionally biased toward basic and acidic residues; that stretch reads PGEEKLEGYSEKAQKGDLGKDS. The tract at residues 862–902 is disordered; it reads PGEEKLEGYSEKAQKGDLGKDSEESEEDGEEEEESEEEEET. Acidic residues predominate over residues 884–902; sequence EESEEDGEEEEESEEEEET. The chain crosses the membrane as a helical span at residues 941–956; that stretch reads HIIKIVSSYIIWVSVK. Topologically, residues 957-962 are extracellular; that stretch reads EVSLFN. Residues 963–972 traverse the membrane as a helical segment; the sequence is YVFLISWAFA. Residues 973 to 980 lie on the Cytoplasmic side of the membrane; the sequence is LPYAKLRR. The chain crosses the membrane as a helical span at residues 981-1001; it reads LASSVCTVWTCVIIVCKMLYQ. Residues 1002–1057 lie on the Extracellular side of the membrane; that stretch reads LQTIKPENFSVNCSLPNENQTNIPFNELNKSLLYSAPIDPTEWVGLRKSSPLLVYL. Residue asparagine 1013 is glycosylated (N-linked (GlcNAc...) asparagine). Residues cysteine 1014 and cysteine 1192 are joined by a disulfide bond. The helical transmembrane segment at 1058-1082 threads the bilayer; sequence RNNLLMLAILAFEVTIYRHQEYYRG. Topologically, residues 1083–1123 are cytoplasmic; sequence RNNLTAPVSRTIFHDITRLHLDDGLINCAKYFINYFFYKFG. Residues 1124–1138 form a helical membrane-spanning segment; it reads LETCFLMSVNVIGQR. Residues 1139 to 1140 are Extracellular-facing; the sequence is MD. Residues 1141-1154 form a helical membrane-spanning segment; it reads FYAMIHACWLIAVL. The Cytoplasmic portion of the chain corresponds to 1155-1165; sequence YRRRRKAIAEI. A helical membrane pass occupies residues 1166–1185; the sequence is WPKYCCFLACIITFQYFICI. Over 1186-1222 the chain is Extracellular; that stretch reads GIPPAPCRDYPWRFKGASFNDNIIKWLYFPDFIVRPN. Residues 1223-1243 traverse the membrane as a helical segment; the sequence is PVFLVYDFMLLLCASLQRQIF. Residues 1244–1297 are Cytoplasmic-facing; it reads EDENKAAVRIMAGDNVEICMNLDAASFSQHNPVPDFIHCRSYLDMSKVIIFSYL. A helical transmembrane segment spans residues 1298-1310; that stretch reads FWFVLTIIFITGT. The Extracellular segment spans residues 1311–1316; the sequence is TRISIF. A helical transmembrane segment spans residues 1317 to 1329; that stretch reads CMGYLVACFYFLL. At 1330 to 1338 the chain is on the cytoplasmic side; it reads FGGDLLLKP. Residues 1339–1364 traverse the membrane as a helical segment; that stretch reads IKSILRYWDWLIAYNVFVITMKNILS. The Extracellular portion of the chain corresponds to 1365–1413; that stretch reads IGACGYIGTLVHNSCWLIQAFSLACTVKGYQMPAANSPCTLPSGEAGII. The helical transmembrane segment at 1414 to 1430 threads the bilayer; that stretch reads WDSICFAFLLLQRRVFM. Topologically, residues 1431 to 1921 are cytoplasmic; it reads SYYFLHVVAD…YAMYNTLVAR (491 aa). Positions 1458 to 1529 form a coiled coil; the sequence is TIVKAVKARI…EREADKQKAK (72 aa). Disordered regions lie at residues 1488–1534, 1593–1636, and 1844–1868; these read QQKY…KKKQ, ALRQ…KKSD, and SQDD…KLGS. The span at 1594–1615 shows a compositional bias: basic residues; that stretch reads LRQRHKEKKRSAREERKRRRKG. A helical transmembrane segment spans residues 1922-1936; the sequence is SEMVCYFVIILNHMV. Over 1937–1943 the chain is Extracellular; sequence SASMITL. Residues 1944–1955 form a helical membrane-spanning segment; it reads LLPILIFLWAML. Topologically, residues 1956 to 1961 are cytoplasmic; it reads SVPRPS. Residues 1962-1983 form a helical membrane-spanning segment; the sequence is RRFWMMAIVYTEVAIVVKYFFQ. The Extracellular portion of the chain corresponds to 1984-2016; it reads FGFFPWNKNVEVNKDKPYHPPNIIGVEKKEGYV. A helical transmembrane segment spans residues 2017 to 2035; it reads LYDLIQLLALFFHRSILKC. Over 2036 to 2189 the chain is Cytoplasmic; that stretch reads HGLWDEDDMT…HPEYSAVTDV (154 aa). 2 disordered regions span residues 2047–2069 and 2090–2135; these read SGMA…DSSD and QQTA…SVLS. The segment covering 2100 to 2127 has biased composition (low complexity); the sequence is GSSSEPSQRSSFSSNRSQRGSTSTRNSS. Residues 2190–2209 form a helical membrane-spanning segment; it reads YVLMFLADTVDFIIIVFGFW. The Extracellular portion of the chain corresponds to 2210 to 2231; the sequence is AFGKHSAAADITSSLSEDQVPG. A helical membrane pass occupies residues 2232–2252; sequence PFLVMVLIQFGTMVVDRALYL. The Cytoplasmic segment spans residues 2253–2256; sequence RKTV. The helical transmembrane segment at 2257-2280 threads the bilayer; sequence LGKVIFQVILVFGIHFWMFFILPG. The Extracellular portion of the chain corresponds to 2281-2289; the sequence is VTERKFSQN. Residues 2290–2312 form a helical membrane-spanning segment; the sequence is LVAQLWYFVKCVYFGLSAYQIRC. The Cytoplasmic segment spans residues 2313–2397; the sequence is GYPTRVLGNF…YPQPRGQKKK (85 aa). The chain crosses the membrane as a helical span at residues 2398–2421; that stretch reads KVVKYGMGGMIIVLLICIVWFPLL. Residues 2422-2669 are Extracellular-facing; it reads FMSLIKSVAG…PSLGFLAGYG (248 aa). The helical transmembrane segment at 2670–2690 threads the bilayer; it reads IMGLYASVVLVIGKFVREFFS. Residues 2691–2752 are Cytoplasmic-facing; sequence GISHSIMFEE…MIKWTREKTN (62 aa).

This sequence belongs to the PIEZO (TC 1.A.75) family. Homotrimer; the homotrimer forms a propeller-shaped Piezo channel with a cation-ion conducting pore. Heterotrimeric interaction may occur between PIEZO1 and PIEZO2. Interacts with STOML3. Interacts with TMC7; the interaction inhibits PIEZO2-conducted mechanically activated currents. Interacts with TMC1; the interaction may be part of the MET complex. Interacts with MDFIC (via C-terminus); the interaction prolongs Piezo channel inactivation. Interacts with MDFI (via C-terminus); the interaction prolongs Piezo channel inactivation.

The protein localises to the cell membrane. The catalysed reaction is Ca(2+)(in) = Ca(2+)(out). With respect to regulation, regulated by auxillary subunits MDFIC and MDFI. Channel activity is inhibited by TMEM120A. Phosphatidic acid and lysophosphatidic acid inhibit PIEZO2 channel activity. Its function is as follows. Pore-forming subunit of the mechanosensitive non-specific cation Piezo channel required for rapidly adapting mechanically activated (MA) currents and has a key role in sensing touch and tactile pain. Piezo channels are homotrimeric three-blade propeller-shaped structures that utilize a cap-motion and plug-and-latch mechanism to gate their ion-conducting pathways. Expressed in sensory neurons, is essential for diverse physiological processes, including respiratory control, systemic metabolism, urinary function, and proprioception. Mediates airway stretch sensing, enabling efficient respiration at birth and maintaining normal breathing in adults. It regulates brown and beige adipose tissue morphology and function, preventing systemic hypermetabolism. In the lower urinary tract, acts as a sensor in both the bladder urothelium and innervating sensory neurons being required for bladder-stretch sensing and urethral micturition reflexes, ensuring proper urinary function. Additionally, PIEZO2 serves as the principal mechanotransducer in proprioceptors, facilitating proprioception and coordinated body movements. In inner ear hair cells, PIEZO1/2 subunits may constitute part of the mechanotransducer (MET) non-selective cation channel complex where they may act as pore-forming ion-conducting component in the complex. Required for Merkel-cell mechanotransduction. Plays a major role in light-touch mechanosensation. This Homo sapiens (Human) protein is Piezo-type mechanosensitive ion channel component 2.